Consider the following 288-residue polypeptide: Probable endonuclease 4 (288 aa).

Positions 75, 115, 153, 187, 190, 224, 237, 239, and 269 each coordinate Zn(2+).

Belongs to the AP endonuclease 2 family. Zn(2+) is required as a cofactor.

The catalysed reaction is Endonucleolytic cleavage to 5'-phosphooligonucleotide end-products.. Endonuclease IV plays a role in DNA repair. It cleaves phosphodiester bonds at apurinic or apyrimidinic (AP) sites, generating a 3'-hydroxyl group and a 5'-terminal sugar phosphate. The protein is Probable endonuclease 4 of Chlamydia trachomatis serovar L2 (strain ATCC VR-902B / DSM 19102 / 434/Bu).